The chain runs to 150 residues: Small ribosomal subunit protein uS7cz/uS7cy (150 aa).

Belongs to the universal ribosomal protein uS7 family. In terms of assembly, part of the 30S ribosomal subunit.

The protein localises to the plastid. Its subcellular location is the chloroplast. One of the primary rRNA binding proteins, it binds directly to 16S rRNA where it nucleates assembly of the head domain of the 30S subunit. The polypeptide is Small ribosomal subunit protein uS7cz/uS7cy (rps7-A) (Adiantum capillus-veneris (Maidenhair fern)).